The chain runs to 410 residues: Multifunctional CCA protein (410 aa).

Positions 8 and 11 each coordinate ATP. CTP contacts are provided by glycine 8 and arginine 11. Positions 21 and 23 each coordinate Mg(2+). 3 residues coordinate ATP: arginine 91, arginine 138, and arginine 141. The CTP site is built by arginine 91, arginine 138, and arginine 141. An HD domain is found at 229-347; sequence TGIHQEMVSD…AQLALVCEAD (119 aa).

It belongs to the tRNA nucleotidyltransferase/poly(A) polymerase family. Bacterial CCA-adding enzyme type 1 subfamily. As to quaternary structure, monomer. Can also form homodimers and oligomers. Mg(2+) serves as cofactor. It depends on Ni(2+) as a cofactor.

The enzyme catalyses a tRNA precursor + 2 CTP + ATP = a tRNA with a 3' CCA end + 3 diphosphate. It carries out the reaction a tRNA with a 3' CCA end + 2 CTP + ATP = a tRNA with a 3' CCACCA end + 3 diphosphate. Catalyzes the addition and repair of the essential 3'-terminal CCA sequence in tRNAs without using a nucleic acid template. Adds these three nucleotides in the order of C, C, and A to the tRNA nucleotide-73, using CTP and ATP as substrates and producing inorganic pyrophosphate. tRNA 3'-terminal CCA addition is required both for tRNA processing and repair. Also involved in tRNA surveillance by mediating tandem CCA addition to generate a CCACCA at the 3' terminus of unstable tRNAs. While stable tRNAs receive only 3'-terminal CCA, unstable tRNAs are marked with CCACCA and rapidly degraded. This Xanthomonas euvesicatoria pv. vesicatoria (strain 85-10) (Xanthomonas campestris pv. vesicatoria) protein is Multifunctional CCA protein.